The following is a 90-amino-acid chain: Small ribosomal subunit protein uS15c (90 aa).

The protein belongs to the universal ribosomal protein uS15 family. In terms of assembly, part of the 30S ribosomal subunit.

It localises to the plastid. The protein localises to the chloroplast. The polypeptide is Small ribosomal subunit protein uS15c (rps15) (Buxus microphylla (Littleleaf boxwood)).